The primary structure comprises 469 residues: Sorting and assembly machinery component 50 homolog (469 aa).

The POTRA domain occupies 45–125; that stretch reads VVVQHVHFDG…LDVTFEVTEL (81 aa). N6-methyllysine is present on Lys255.

This sequence belongs to the SAM50/omp85 family. In terms of assembly, associates with the mitochondrial contact site and cristae organizing system (MICOS) complex, composed of at least MICOS10/MIC10, CHCHD3/MIC19, CHCHD6/MIC25, APOOL/MIC27, IMMT/MIC60, APOO/MIC23/MIC26 and QIL1/MIC13. This complex was also known under the names MINOS or MitOS complex. The MICOS complex associates with mitochondrial outer membrane proteins SAMM50, MTX1 and MTX2 (together described as components of the mitochondrial outer membrane sorting assembly machinery (SAM) complex) and DNAJC11, mitochondrial inner membrane protein TMEM11 and with HSPA9. The MICOS and SAM complexes together with DNAJC11 are part of a large protein complex spanning both membranes termed the mitochondrial intermembrane space bridging (MIB) complex. Interacts with IMMT/MIC60. Interacts with CHCHD3/MIC19. Interacts with ARMC1. As to quaternary structure, (Microbial infection) Interacts with parasite T.gondii RH strain MAF1b1; the interaction is probably indirect and results in the disruption of the MIB complex and the formation of SPOTs (structures positive for outer mitochondrial membrane (OMM)), a cellular response to OMM stress, which leads to the constitutive shedding of OMM vesicles.

Its subcellular location is the mitochondrion outer membrane. It is found in the cytoplasm. The protein resides in the mitochondrion. Functionally, plays a crucial role in the maintenance of the structure of mitochondrial cristae and the proper assembly of the mitochondrial respiratory chain complexes. Required for the assembly of TOMM40 into the TOM complex. This is Sorting and assembly machinery component 50 homolog (Samm50) from Mus musculus (Mouse).